The sequence spans 882 residues: Alanine--tRNA ligase (882 aa).

Zn(2+) is bound by residues His-570, His-574, Cys-672, and His-676.

The protein belongs to the class-II aminoacyl-tRNA synthetase family. Zn(2+) serves as cofactor.

It localises to the cytoplasm. It carries out the reaction tRNA(Ala) + L-alanine + ATP = L-alanyl-tRNA(Ala) + AMP + diphosphate. Functionally, catalyzes the attachment of alanine to tRNA(Ala) in a two-step reaction: alanine is first activated by ATP to form Ala-AMP and then transferred to the acceptor end of tRNA(Ala). Also edits incorrectly charged Ser-tRNA(Ala) and Gly-tRNA(Ala) via its editing domain. This Xanthomonas campestris pv. campestris (strain ATCC 33913 / DSM 3586 / NCPPB 528 / LMG 568 / P 25) protein is Alanine--tRNA ligase.